The sequence spans 204 residues: Superoxide dismutase [Mn] (204 aa).

His27 serves as a coordination point for Mn(2+). Phosphothreonine is present on residues Thr34 and Thr70. Positions 82, 164, and 168 each coordinate Mn(2+).

Belongs to the iron/manganese superoxide dismutase family. In terms of assembly, homodimer. Mn(2+) is required as a cofactor.

It catalyses the reaction 2 superoxide + 2 H(+) = H2O2 + O2. Functionally, destroys superoxide anion radicals which are normally produced within the cells and which are toxic to biological systems. This is Superoxide dismutase [Mn] (sodA) from Geobacillus stearothermophilus (Bacillus stearothermophilus).